We begin with the raw amino-acid sequence, 418 residues long: Pyruvate decarboxylase 1 (418 aa).

His59 serves as a coordination point for substrate. The segment at 337–418 (DSWFNCQKLK…IFLINNGGYT (82 aa)) is thiamine pyrophosphate binding. Residues Asp387, Asn414, and Gly416 each coordinate Mg(2+).

It belongs to the TPP enzyme family. In terms of assembly, homotetramer. A metal cation is required as a cofactor. The cofactor is thiamine diphosphate. In terms of tissue distribution, leaves.

The catalysed reaction is a 2-oxocarboxylate + H(+) = an aldehyde + CO2. In Nicotiana tabacum (Common tobacco), this protein is Pyruvate decarboxylase 1 (PDC1).